We begin with the raw amino-acid sequence, 265 residues long: Catechol O-methyltransferase (265 aa).

At 1–2 (ML) the chain is on the cytoplasmic side. A helical; Signal-anchor for type II membrane protein membrane pass occupies residues 3–19 (LAAVSLGLLLLAFLLLL). The Extracellular portion of the chain corresponds to 20 to 265 (RHLGWGLVAI…QGPGSSPVKS (246 aa)). Residues Val-85, Glu-107, Ser-115, Glu-133, Ile-134, 160–163 (GASQ), Ser-162, and Asp-184 contribute to the S-adenosyl-L-methionine site. A Mg(2+)-binding site is contributed by Asp-184. Residue Lys-187 participates in substrate binding. Mg(2+)-binding residues include Asp-212 and Asn-213. Substrate is bound by residues Asn-213 and Glu-242. 3 positions are modified to phosphoserine: Ser-260, Ser-261, and Ser-265.

This sequence belongs to the class I-like SAM-binding methyltransferase superfamily. Cation-dependent O-methyltransferase family. Mg(2+) serves as cofactor.

It is found in the cytoplasm. Its subcellular location is the cell membrane. It carries out the reaction a catechol + S-adenosyl-L-methionine = a guaiacol + S-adenosyl-L-homocysteine + H(+). The catalysed reaction is 2-hydroxyestrone + S-adenosyl-L-methionine = 2-hydroxy-3-methoxy-estrone + S-adenosyl-L-homocysteine + H(+). The enzyme catalyses 4-hydroxyestrone + S-adenosyl-L-methionine = 4-methoxyestrone + S-adenosyl-L-homocysteine + H(+). It catalyses the reaction 2-hydroxyestrone + S-adenosyl-L-methionine = 2-methoxyestrone + S-adenosyl-L-homocysteine + H(+). It carries out the reaction 4-hydroxy-17beta-estradiol + S-adenosyl-L-methionine = 4-methoxy-17beta-estradiol + S-adenosyl-L-homocysteine + H(+). The catalysed reaction is 2-hydroxy-17beta-estradiol + S-adenosyl-L-methionine = 2-hydroxy-3-methoxy-17beta-estradiol + S-adenosyl-L-homocysteine + H(+). The enzyme catalyses 2-hydroxy-17beta-estradiol + S-adenosyl-L-methionine = 2-methoxy-17beta-estradiol + S-adenosyl-L-homocysteine + H(+). Functionally, catalyzes the O-methylation, and thereby the inactivation, of catecholamine neurotransmitters and catechol hormones. Also shortens the biological half-lives of certain neuroactive drugs, like L-DOPA, alpha-methyl DOPA and isoproterenol. The polypeptide is Catechol O-methyltransferase (Mus musculus (Mouse)).